Here is a 102-residue protein sequence, read N- to C-terminus: NADH-quinone oxidoreductase subunit K (102 aa).

3 helical membrane-spanning segments follow: residues 5-25 (LEHYLAVAAILFVTGIFGIFV), 31-51 (IVILMSIELMLLAVNINMVAF), and 66-86 (FVLTVAAAEAAIGLAILVVFF).

It belongs to the complex I subunit 4L family. In terms of assembly, NDH-1 is composed of 14 different subunits. Subunits NuoA, H, J, K, L, M, N constitute the membrane sector of the complex.

It is found in the cellular chromatophore membrane. The catalysed reaction is a quinone + NADH + 5 H(+)(in) = a quinol + NAD(+) + 4 H(+)(out). Its function is as follows. NDH-1 shuttles electrons from NADH, via FMN and iron-sulfur (Fe-S) centers, to quinones in the respiratory chain. The immediate electron acceptor for the enzyme in this species is believed to be ubiquinone. Couples the redox reaction to proton translocation (for every two electrons transferred, four hydrogen ions are translocated across the cytoplasmic membrane), and thus conserves the redox energy in a proton gradient. The chain is NADH-quinone oxidoreductase subunit K from Rhodobacter capsulatus (Rhodopseudomonas capsulata).